Here is a 497-residue protein sequence, read N- to C-terminus: Probable gamma-aminobutyrate transaminase 2, mitochondrial (497 aa).

A mitochondrion-targeting transit peptide spans 1–37; it reads MNLIKHAAFAASFQGETDCTSHASARKFSTSGSSPLL. 153–154 lines the pyridoxal 5'-phosphate pocket; sequence GS. Y186 lines the substrate pocket. D293 contacts pyridoxal 5'-phosphate. Residue K322 participates in substrate binding. At K322 the chain carries N6-(pyridoxal phosphate)lysine.

It belongs to the class-III pyridoxal-phosphate-dependent aminotransferase family.

The protein resides in the mitochondrion. The enzyme catalyses 4-aminobutanoate + pyruvate = succinate semialdehyde + L-alanine. It carries out the reaction 4-aminobutanoate + glyoxylate = succinate semialdehyde + glycine. In terms of biological role, transaminase that degrades gamma-amino butyric acid (GABA). This chain is Probable gamma-aminobutyrate transaminase 2, mitochondrial, found in Oryza sativa subsp. indica (Rice).